Consider the following 836-residue polypeptide: Zinc fingers and homeoboxes protein 2 (836 aa).

The disordered stretch occupies residues 1-61 (MASKRKSTTP…EHSSKETEVV (61 aa)). The segment covering 8–19 (TTPCMVRTSQVL) has biased composition (polar residues). The tract at residues 27-77 (ADRAKDKGAGMPQSDVTKDSWAAEPEHSSKETEVVEVKSMGENLSKKLQGG) is interaction with EFNB1. The span at 50–61 (EPEHSSKETEVV) shows a compositional bias: basic and acidic residues. Lys64 participates in a covalent cross-link: Glycyl lysine isopeptide (Lys-Gly) (interchain with G-Cter in SUMO2). 2 consecutive C2H2-type zinc fingers follow at residues 78 to 101 (YECKYCPYSTQNLNEFTEHVDMQH) and 110 to 133 (YVCAECNFTTKKYDSLSDHNSKFH). Residues 164–214 (PITASGPGSSDNDPGVSVGKTPMTKTGKLKADAKKVPKKPDEAAPENHMEG) form a disordered region. Positions 192-214 (LKADAKKVPKKPDEAAPENHMEG) are enriched in basic and acidic residues. Positions 195 to 358 (DAKKVPKKPD…PAQLTPTKVS (164 aa)) are required for homodimerization. 4 DNA-binding regions (homeobox) span residues 263-324 (NTTK…WSPE), 439-501 (TPAS…IVHI), 530-591 (PQKF…EQAV), and 628-690 (SPSS…TLSW). Residues 263–446 (NTTKYNSALD…PLTPASDRKK (184 aa)) are required for repressor activity. Residues 263 to 497 (NTTKYNSALD…SDHRYRCQRG (235 aa)) are required for interaction with NFYA. Residues 317–446 (HGISWSPEEV…PLTPASDRKK (130 aa)) are required for nuclear localization. A disordered region spans residues 404–442 (GQKRPLVTPQAAPEPKRPHIAQVPEPPPKVANTPLTPAS). Residue Lys455 forms a Glycyl lysine isopeptide (Lys-Gly) (interchain with G-Cter in SUMO2) linkage. Composition is skewed to basic and acidic residues over residues 699–709 (MSDDRGRDAVS), 730–746 (YAKDPKALSEEDSEKLV), and 813–824 (RVAEGTVERADS). Positions 699-836 (MSDDRGRDAV…DSTPAEAGQA (138 aa)) are disordered. Phosphoserine is present on residues Ser824 and Ser826.

It belongs to the ZHX family. In terms of assembly, homodimer (via homeobox domain 1). Heterodimer with ZHX1 (via homeobox domain 1). Heterodimer with ZHX3 (via homeobox domain 1). Heterodimerization with ZHX1 is not necessary for repressor activity. Interacts (via homeobox domain) with NFYA (via N-terminus). Interacts with EFNB1 intracellular domain peptide; the interaction enhances ZHX2 transcriptional repression activity. In terms of tissue distribution, expressed in retina where it localizes to Muller glial cells of the inner nuclear layer (at protein level). Detected in heart, brain, spleen, lung, liver, skeletal muscle, kidney and testis.

Its subcellular location is the nucleus. Its function is as follows. Acts as a transcriptional repressor. Represses the promoter activity of the CDC25C gene stimulated by NFYA. May play a role in retinal development where it regulates the composition of bipolar cell populations, by promoting differentiation of bipolar OFF-type cells. In the brain, may promote maintenance and suppress differentiation of neural progenitor cells in the developing cortex. In Mus musculus (Mouse), this protein is Zinc fingers and homeoboxes protein 2 (Zhx2).